The following is a 386-amino-acid chain: MLVLVINSGSSSLKFQVRDVAAGTVLTEGLIEKIGMGNGGDGDGEIVGPRDHAEALEQVEAAIHEELGDLKLGAVGHRVVHGGERFGEPVLIDNEITRAIERLNPLAPLHNPANVLGIRAITRKWPDMPQVAVFDTAFHRTLPEHAWRYAVPDELYTNHGIRRYGFHGTSHEYVARRAAALLDLPVEEFDAVIAHLGNGASITAIQGGHSVDTSMGFTPLEGLVMGTRSGDLDPSILVFLGRAGWTPEDLDSMLNRESGLKGLAGNNDMRSVVEASEDGDAKAAMALAVTSYRLAKYIGGYHVAVGGAKALVFTAGIGENSHQFRALVADRLGALGVEVDAGLNAARSKEPRIISTPQSAIPVLVVPTDEERAIAEATAAVAGSGR.

Residue Asn7 coordinates Mg(2+). Lys14 is an ATP binding site. Arg78 provides a ligand contact to substrate. Catalysis depends on Asp135, which acts as the Proton donor/acceptor. ATP is bound by residues His195 to Gly199, Asp268 to Arg270, and Gly316 to Asn320. Residue Glu370 participates in Mg(2+) binding.

It belongs to the acetokinase family. Homodimer. The cofactor is Mg(2+). Requires Mn(2+) as cofactor.

The protein resides in the cytoplasm. It catalyses the reaction acetate + ATP = acetyl phosphate + ADP. It functions in the pathway metabolic intermediate biosynthesis; acetyl-CoA biosynthesis; acetyl-CoA from acetate: step 1/2. In terms of biological role, catalyzes the formation of acetyl phosphate from acetate and ATP. Can also catalyze the reverse reaction. The protein is Acetate kinase of Pseudarthrobacter chlorophenolicus (strain ATCC 700700 / DSM 12829 / CIP 107037 / JCM 12360 / KCTC 9906 / NCIMB 13794 / A6) (Arthrobacter chlorophenolicus).